We begin with the raw amino-acid sequence, 341 residues long: Glycerol-3-phosphate dehydrogenase [NAD(P)+] (341 aa).

NADPH contacts are provided by Ser11, Trp12, Arg33, and Lys106. Positions 106, 137, and 139 each coordinate sn-glycerol 3-phosphate. Ala141 provides a ligand contact to NADPH. Sn-glycerol 3-phosphate is bound by residues Lys192, Asp245, Ser255, Arg256, and Asn257. The active-site Proton acceptor is the Lys192. Arg256 contributes to the NADPH binding site. The NADPH site is built by Val280 and Glu282.

Belongs to the NAD-dependent glycerol-3-phosphate dehydrogenase family.

The protein localises to the cytoplasm. It carries out the reaction sn-glycerol 3-phosphate + NAD(+) = dihydroxyacetone phosphate + NADH + H(+). It catalyses the reaction sn-glycerol 3-phosphate + NADP(+) = dihydroxyacetone phosphate + NADPH + H(+). The protein operates within membrane lipid metabolism; glycerophospholipid metabolism. In terms of biological role, catalyzes the reduction of the glycolytic intermediate dihydroxyacetone phosphate (DHAP) to sn-glycerol 3-phosphate (G3P), the key precursor for phospholipid synthesis. The sequence is that of Glycerol-3-phosphate dehydrogenase [NAD(P)+] from Bacillus cytotoxicus (strain DSM 22905 / CIP 110041 / 391-98 / NVH 391-98).